The following is a 450-amino-acid chain: Probable ECA polymerase (450 aa).

A run of 11 helical transmembrane segments spans residues phenylalanine 6 to phenylalanine 26, valine 37 to leucine 57, valine 63 to alanine 83, valine 118 to leucine 138, glycine 155 to leucine 175, alanine 181 to glycine 201, isoleucine 207 to tryptophan 227, methionine 228 to tyrosine 248, leucine 341 to isoleucine 361, tyrosine 378 to alanine 398, and valine 410 to phenylalanine 430.

This sequence belongs to the WzyE family. As to quaternary structure, probably part of a complex composed of WzxE, WzyE and WzzE.

It is found in the cell inner membrane. It functions in the pathway bacterial outer membrane biogenesis; enterobacterial common antigen biosynthesis. Probably involved in the polymerization of enterobacterial common antigen (ECA) trisaccharide repeat units. This Escherichia coli O139:H28 (strain E24377A / ETEC) protein is Probable ECA polymerase.